Here is a 483-residue protein sequence, read N- to C-terminus: Auxin transporter-like protein 2 (483 aa).

At 1-53 the chain is on the cytoplasmic side; that stretch reads MENGEKAAETVVVGNYVEMEKDGKALDIKSKLSDMFWHGGSAYDAWFSCASNQ. Residues 54 to 71 traverse the membrane as a helical segment; the sequence is VAQVLLTLPYSFSQLGML. Residues 72 to 73 lie on the Extracellular side of the membrane; that stretch reads SG. A helical membrane pass occupies residues 74–94; that stretch reads ILFQLFYGILGSWTAYLISIL. Residues 95–130 lie on the Cytoplasmic side of the membrane; that stretch reads YVEYRTRKEREKVNFRNHVIQWFEVLDGLLGKHWRN. The helical transmembrane segment at 131–151 threads the bilayer; that stretch reads VGLAFNCTFLLFGSVIQLIAC. The Extracellular portion of the chain corresponds to 152 to 166; it reads ASNIYYINDNLDKRT. A helical membrane pass occupies residues 167–187; the sequence is WTYIFGACCATTVFIPSFHNY. Residues 188–190 lie on the Cytoplasmic side of the membrane; sequence RIW. A helical transmembrane segment spans residues 191–211; sequence SFLGLLMTTYTAWYLTIASIL. Over 212–226 the chain is Extracellular; it reads HGQVEGVKHSGPSKL. A helical transmembrane segment spans residues 227-247; sequence VLYFTGATNILYTFGGHAVTV. Topologically, residues 248–261 are cytoplasmic; that stretch reads EIMHAMWKPQKFKS. Residues 262–282 form a helical membrane-spanning segment; the sequence is IYLFATLYVLTLTLPSASAVY. At 283-306 the chain is on the extracellular side; the sequence is WAFGDLLLNHSNAFALLPKNLYRD. Residue asparagine 291 is glycosylated (N-linked (GlcNAc...) asparagine). Residues 307–327 traverse the membrane as a helical segment; sequence FAVVLMLIHQFITFGFACTPL. Topologically, residues 328-350 are cytoplasmic; that stretch reads YFVWEKLIGMHECRSMCKRAAAR. The chain crosses the membrane as a helical span at residues 351–371; the sequence is LPVVIPIWFLAIIFPFFGPIN. Residues 372–374 are Extracellular-facing; sequence STV. A helical membrane pass occupies residues 375–395; that stretch reads GSLLVSFTVYIIPALAHIFTF. At 396-422 the chain is on the cytoplasmic side; that stretch reads RSSAARENAVEQPPRFLGRWTGAFTIN. The helical transmembrane segment at 423-443 threads the bilayer; sequence AFIVVWVFIVGFGFGGWASMI. Topologically, residues 444 to 483 are extracellular; sequence NFVHQIDTFGLFTKCYQCPPPVMVSPPPISHPHFNHTHGL. Asparagine 478 carries an N-linked (GlcNAc...) asparagine glycan.

It belongs to the amino acid/polyamine transporter 2 family. Amino acid/auxin permease (AAAP) (TC 2.A.18.1) subfamily.

The protein localises to the cell membrane. In terms of biological role, carrier protein involved in proton-driven auxin influx. Mediates the formation of auxin gradient from developing leaves (site of auxin biosynthesis) to tips by contributing to the loading of auxin in vascular tissues and facilitating acropetal (base to tip) auxin transport within inner tissues of the root apex, and basipetal (tip to base) auxin transport within outer tissues of the root apex. This Arabidopsis thaliana (Mouse-ear cress) protein is Auxin transporter-like protein 2 (LAX2).